The sequence spans 187 residues: Putative gamma-glutamylcyclotransferase At3g02910 (187 aa).

Substrate is bound at residue 17 to 20 (YGTL). Glu92 functions as the Proton acceptor in the catalytic mechanism.

The protein belongs to the gamma-glutamylcyclotransferase family.

Functionally, putative gamma-glutamylcyclotransferase. The chain is Putative gamma-glutamylcyclotransferase At3g02910 from Arabidopsis thaliana (Mouse-ear cress).